The primary structure comprises 201 residues: Dermatopontin (201 aa).

The N-terminal stretch at 1–18 (MDLTLLWVLLPLVTTAWG) is a signal peptide. At glutamine 19 the chain carries Pyrrolidone carboxylic acid. The interval 19 to 186 (QYGGYGYPYQ…AVERDRQWKF (168 aa)) is 2 X 53-55 AA tandem repeats. Tyrosine 23 is subject to Sulfotyrosine. 4 tandem repeats follow at residues 26-79 (PYQQ…ACMP), 70-75 (DRQWNY), 80-135 (TPQS…CCRY), and 125-130 (DREWQF). 5 cysteine pairs are disulfide-bonded: cysteine 50–cysteine 77, cysteine 90–cysteine 132, cysteine 106–cysteine 133, cysteine 139–cysteine 196, and cysteine 143–cysteine 189. The tract at residues 70–186 (DRQWNYACMP…AVERDRQWKF (117 aa)) is 3 X 6 AA tandem repeats of D-R-[EQ]-W-[NQK]-[FY]. Sulfotyrosine is present on residues tyrosine 162, tyrosine 164, and tyrosine 167. Residues 181-186 (DRQWKF) form a 2-3 repeat. At tyrosine 194 the chain carries Sulfotyrosine.

Belongs to the dermatopontin family. Interacts with TGFB1, DCN and collagen. Post-translationally, sulfated on tyrosine residue(s).

The protein localises to the secreted. It localises to the extracellular space. It is found in the extracellular matrix. Seems to mediate adhesion by cell surface integrin binding. May serve as a communication link between the dermal fibroblast cell surface and its extracellular matrix environment. Enhances TGFB1 activity. Inhibits cell proliferation. Accelerates collagen fibril formation, and stabilizes collagen fibrils against low-temperature dissociation. This chain is Dermatopontin (Dpt), found in Mus musculus (Mouse).